Consider the following 466-residue polypeptide: Ribosomal protein uS12 methylthiotransferase RimO (466 aa).

Residues P16–A127 form the MTTase N-terminal domain. Residues C25, C61, C90, C165, C169, and C172 each contribute to the [4Fe-4S] cluster site. Positions T151–E380 constitute a Radical SAM core domain. The 72-residue stretch at Q383–G454 folds into the TRAM domain.

This sequence belongs to the methylthiotransferase family. RimO subfamily. [4Fe-4S] cluster is required as a cofactor.

The protein localises to the cytoplasm. The catalysed reaction is L-aspartate(89)-[ribosomal protein uS12]-hydrogen + (sulfur carrier)-SH + AH2 + 2 S-adenosyl-L-methionine = 3-methylsulfanyl-L-aspartate(89)-[ribosomal protein uS12]-hydrogen + (sulfur carrier)-H + 5'-deoxyadenosine + L-methionine + A + S-adenosyl-L-homocysteine + 2 H(+). In terms of biological role, catalyzes the methylthiolation of an aspartic acid residue of ribosomal protein uS12. The sequence is that of Ribosomal protein uS12 methylthiotransferase RimO from Synechococcus sp. (strain CC9902).